We begin with the raw amino-acid sequence, 853 residues long: DNA mismatch repair protein MutS (853 aa).

Residue 614–621 (GPNMGGKS) coordinates ATP.

The protein belongs to the DNA mismatch repair MutS family.

Functionally, this protein is involved in the repair of mismatches in DNA. It is possible that it carries out the mismatch recognition step. This protein has a weak ATPase activity. The protein is DNA mismatch repair protein MutS of Escherichia coli O157:H7 (strain EC4115 / EHEC).